A 246-amino-acid chain; its full sequence is Exosome complex component Rrp41 (246 aa).

This sequence belongs to the RNase PH family. Rrp41 subfamily. In terms of assembly, component of the archaeal exosome complex. Forms a hexameric ring-like arrangement composed of 3 Rrp41-Rrp42 heterodimers. The hexameric ring associates with a trimer of Rrp4 and/or Csl4 subunits.

Its subcellular location is the cytoplasm. Catalytic component of the exosome, which is a complex involved in RNA degradation. Has 3'-&gt;5' exoribonuclease activity. Can also synthesize heteromeric RNA-tails. The polypeptide is Exosome complex component Rrp41 (Pyrobaculum islandicum (strain DSM 4184 / JCM 9189 / GEO3)).